The following is a 464-amino-acid chain: tRNA(Ile2) 2-agmatinylcytidine synthetase TiaS (464 aa).

This sequence belongs to the TiaS family.

The protein resides in the cytoplasm. It catalyses the reaction cytidine(34) in tRNA(Ile2) + agmatine + ATP + H2O = 2-agmatinylcytidine(34) in tRNA(Ile2) + AMP + 2 phosphate + 2 H(+). In terms of biological role, ATP-dependent agmatine transferase that catalyzes the formation of 2-agmatinylcytidine (agm2C) at the wobble position (C34) of tRNA(Ile2), converting the codon specificity from AUG to AUA. This is tRNA(Ile2) 2-agmatinylcytidine synthetase TiaS from Ignisphaera aggregans (strain DSM 17230 / JCM 13409 / AQ1.S1).